A 122-amino-acid chain; its full sequence is MYLKKHYKNLITHEIEEEFKKNDIPILDIGDSIKMSILIHEGNKQRIQNVEGVIIAKHKSQLSTTITVRKIVQNIGVERIYLIHSPLIKNIKIVRKAKVRRAKLYYLRLRSGKATRLKTKFN.

The protein belongs to the bacterial ribosomal protein bL19 family.

Its subcellular location is the plastid. The protein resides in the chloroplast. The chain is Large ribosomal subunit protein bL19c from Gracilaria tenuistipitata var. liui (Red alga).